Consider the following 232-residue polypeptide: Ubiquinone biosynthesis O-methyltransferase (232 aa).

4 residues coordinate S-adenosyl-L-methionine: R36, G55, D76, and L120.

Belongs to the methyltransferase superfamily. UbiG/COQ3 family.

The catalysed reaction is a 3-demethylubiquinol + S-adenosyl-L-methionine = a ubiquinol + S-adenosyl-L-homocysteine + H(+). It carries out the reaction a 3-(all-trans-polyprenyl)benzene-1,2-diol + S-adenosyl-L-methionine = a 2-methoxy-6-(all-trans-polyprenyl)phenol + S-adenosyl-L-homocysteine + H(+). The protein operates within cofactor biosynthesis; ubiquinone biosynthesis. In terms of biological role, O-methyltransferase that catalyzes the 2 O-methylation steps in the ubiquinone biosynthetic pathway. This is Ubiquinone biosynthesis O-methyltransferase from Pseudomonas aeruginosa (strain ATCC 15692 / DSM 22644 / CIP 104116 / JCM 14847 / LMG 12228 / 1C / PRS 101 / PAO1).